We begin with the raw amino-acid sequence, 150 residues long: MSVNDYSLFDEATDELVSSERKLIAVDCHDDDSQVINVKVEDIFCDMSDKVVLKLQFRLCYKYRKLLDITLLGCRMKVYTELKTPSERSLKSILQKKMNIISDGNYLIGIRMFFININQLINTCKWITRIEDVYPICTLYHVNNTPVIDI.

It belongs to the nanovirus U1 protein family.

This is Protein U1 (DNA-U1) from Astragalus sinicus (Chinese milk vetch).